The chain runs to 641 residues: Chaperone protein DnaK (641 aa).

Thr199 carries the post-translational modification Phosphothreonine; by autocatalysis. The segment at 603-627 (YGQQQAEGGAQAAGAAGGSSKADDA) is disordered. The span at 604–616 (GQQQAEGGAQAAG) shows a compositional bias: low complexity.

It belongs to the heat shock protein 70 family.

Acts as a chaperone. In Azoarcus sp. (strain BH72), this protein is Chaperone protein DnaK.